Consider the following 207-residue polypeptide: Cytochrome c biogenesis ATP-binding export protein CcmA (207 aa).

In terms of domain architecture, ABC transporter spans 4-207 (LEARELLCER…RISLTQTGAA (204 aa)). 36-43 (GSNGAGKT) provides a ligand contact to ATP.

This sequence belongs to the ABC transporter superfamily. CcmA exporter (TC 3.A.1.107) family. The complex is composed of two ATP-binding proteins (CcmA) and two transmembrane proteins (CcmB).

The protein localises to the cell inner membrane. It catalyses the reaction heme b(in) + ATP + H2O = heme b(out) + ADP + phosphate + H(+). Functionally, part of the ABC transporter complex CcmAB involved in the biogenesis of c-type cytochromes; once thought to export heme, this seems not to be the case, but its exact role is uncertain. Responsible for energy coupling to the transport system. The sequence is that of Cytochrome c biogenesis ATP-binding export protein CcmA from Escherichia coli O6:H1 (strain CFT073 / ATCC 700928 / UPEC).